Consider the following 527-residue polypeptide: Pentatricopeptide repeat-containing protein At5g41170, mitochondrial (527 aa).

Residues 1-35 (MAMRFFQLHRNRLVKGNSGKALSFSRLLDLSFWVR) constitute a mitochondrion transit peptide. PPR repeat units lie at residues 36–70 (AFCN…RPLP), 71–105 (SIID…GVSH), 106–140 (DLYT…GFEP), 141–175 (DIVT…GIKP), 176–210 (DVVM…GIRP), 211–245 (DVVM…KIKP), 246–280 (DVIT…SIAP), 281–315 (NIFT…GCFP), 316–350 (DVVA…GLTG), 351–385 (NTIT…GVPP), 386–420 (NIRT…EMDG), 424–458 (NIWT…EMDI), 459–493 (GIIT…GVKP), and 494–527 (NVVT…DGVS).

Belongs to the PPR family. P subfamily.

It localises to the mitochondrion. The chain is Pentatricopeptide repeat-containing protein At5g41170, mitochondrial from Arabidopsis thaliana (Mouse-ear cress).